Reading from the N-terminus, the 106-residue chain is Large ribosomal subunit protein eL42 (106 aa).

The protein belongs to the eukaryotic ribosomal protein eL42 family.

In Wickerhamomyces ciferrii (strain ATCC 14091 / BCRC 22168 / CBS 111 / JCM 3599 / NBRC 0793 / NRRL Y-1031 F-60-10) (Yeast), this protein is Large ribosomal subunit protein eL42 (RPL44).